The chain runs to 127 residues: Large ribosomal subunit protein bL12 (127 aa).

The protein belongs to the bacterial ribosomal protein bL12 family. As to quaternary structure, homodimer. Part of the ribosomal stalk of the 50S ribosomal subunit. Forms a multimeric L10(L12)X complex, where L10 forms an elongated spine to which 2 to 4 L12 dimers bind in a sequential fashion. Binds GTP-bound translation factors.

Its function is as follows. Forms part of the ribosomal stalk which helps the ribosome interact with GTP-bound translation factors. Is thus essential for accurate translation. This chain is Large ribosomal subunit protein bL12, found in Caulobacter vibrioides (strain ATCC 19089 / CIP 103742 / CB 15) (Caulobacter crescentus).